The chain runs to 37 residues: Large ribosomal subunit protein bL36c (37 aa).

Belongs to the bacterial ribosomal protein bL36 family.

The protein localises to the plastid. The protein resides in the chloroplast. The sequence is that of Large ribosomal subunit protein bL36c from Coffea arabica (Arabian coffee).